Reading from the N-terminus, the 293-residue chain is Acetylglutamate kinase (293 aa).

Substrate is bound by residues 68–69 (GG), arginine 90, and asparagine 189.

It belongs to the acetylglutamate kinase family. ArgB subfamily.

It is found in the cytoplasm. It carries out the reaction N-acetyl-L-glutamate + ATP = N-acetyl-L-glutamyl 5-phosphate + ADP. It functions in the pathway amino-acid biosynthesis; L-arginine biosynthesis; N(2)-acetyl-L-ornithine from L-glutamate: step 2/4. Its function is as follows. Catalyzes the ATP-dependent phosphorylation of N-acetyl-L-glutamate. The sequence is that of Acetylglutamate kinase from Caldicellulosiruptor bescii (strain ATCC BAA-1888 / DSM 6725 / KCTC 15123 / Z-1320) (Anaerocellum thermophilum).